The sequence spans 201 residues: Endoribonuclease YbeY (201 aa).

Positions 120, 124, and 130 each coordinate Zn(2+). The segment at 151–201 (DGADGADGADGARGAADGAADGGEGRRGDQGRRGDQGRGGGAGEPPAAPAR) is disordered. Positions 173–186 (GEGRRGDQGRRGDQ) are enriched in basic and acidic residues.

It belongs to the endoribonuclease YbeY family. Zn(2+) serves as cofactor.

It localises to the cytoplasm. In terms of biological role, single strand-specific metallo-endoribonuclease involved in late-stage 70S ribosome quality control and in maturation of the 3' terminus of the 16S rRNA. The protein is Endoribonuclease YbeY of Frankia casuarinae (strain DSM 45818 / CECT 9043 / HFP020203 / CcI3).